A 265-amino-acid chain; its full sequence is uncharacterized protein (265 aa).

E47 is an active-site residue.

The protein belongs to the PhzF family.

This is an uncharacterized protein from Halalkalibacterium halodurans (strain ATCC BAA-125 / DSM 18197 / FERM 7344 / JCM 9153 / C-125) (Bacillus halodurans).